A 145-amino-acid chain; its full sequence is Large-conductance mechanosensitive channel (145 aa).

2 consecutive transmembrane segments (helical) span residues 14–34 (VIDL…VNSL) and 83–103 (GAFL…FLLV).

The protein belongs to the MscL family. As to quaternary structure, homopentamer.

The protein resides in the cell inner membrane. Channel that opens in response to stretch forces in the membrane lipid bilayer. May participate in the regulation of osmotic pressure changes within the cell. In Paracoccus denitrificans (strain Pd 1222), this protein is Large-conductance mechanosensitive channel.